We begin with the raw amino-acid sequence, 456 residues long: Yersinopine synthase (456 aa).

NADP(+)-binding positions include 12–15, 35–40, and threonine 154; these read AGPA and NRPSTK. Histidine 242 (proton donor/acceptor) is an active-site residue.

The protein belongs to the staphylopine dehydrogenase family. In terms of assembly, homodimer.

It carries out the reaction yersinopine + NADP(+) + H2O = (2S)-2-amino-4-{[(1S)-1-carboxy-2-(1H-imidazol-4-yl)ethyl]amino}butanoate + pyruvate + NADPH + H(+). Its function is as follows. Catalyzes the NADPH-dependent reductive condensation of pyruvate to the intermediate formed by the adjacently encoded enzyme y2836, namely (2S)-2-amino-4-{[(1S)-1-carboxy-2-(1H-imidazol-4-yl)ethyl]amino}butanoate, leading to the production of yersinopine. This is the last step in the biosynthesis of the metallophore yersinopine, which is involved in metal acquisition and thus enables bacterial growth inside the host, where metal access is limited. Therefore, this enzyme probably contributes to Yersinia virulence. Cannot use alpha-ketoglutarate in place of pyruvate, and displays only poor efficiency with oxaloacetate and glyoxylate. This is Yersinopine synthase from Yersinia pestis.